A 174-amino-acid polypeptide reads, in one-letter code: Calcineurin subunit B (174 aa).

4 consecutive EF-hand domains span residues 21–56 (EEIERIRKRFIKIDANQSGSIDRNEFLSIPSVASNP), 60–88 (RLFSVVDEDGGGDVDFQEFINSLSVFSVH), 90–125 (NKEEKLKFAFKIYDIDRDGYISNGELYLVLKMMVGT), and 131–166 (QLQQIVDKTIMEVDKDRDGKISFEEFKDIVSGSNVT). The Ca(2+) site is built by Asp34, Asn36, Ser38, Ser40, Glu45, Asp66, Asp68, Asp72, Glu77, Asp103, Asp105, Asp107, Tyr109, Glu114, Asp144, Asp146, Asp148, Lys150, and Glu155.

This sequence belongs to the calcineurin regulatory subunit family. As to quaternary structure, composed of a catalytic subunit (A) and a regulatory subunit (B).

In terms of biological role, regulatory subunit of calcineurin, a calcium-dependent, calmodulin stimulated protein phosphatase. Confers calcium sensitivity. This Schizosaccharomyces pombe (strain 972 / ATCC 24843) (Fission yeast) protein is Calcineurin subunit B (cnb1).